Here is a 123-residue protein sequence, read N- to C-terminus: Methicillin resistance regulatory protein MecI (123 aa).

The H-T-H motif DNA-binding region spans 7–71 (EISSAEWEVM…KDNKIFQYYS (65 aa)). Residues 74–123 (EESDIKYKTSKNFINKVYKGGFNSLVLNFVEKEDLSQDEIEELRNILNKK) are important for dimerization.

The protein belongs to the BlaI transcriptional regulatory family. As to quaternary structure, monomer and homodimer. Post-translationally, upon exposure to beta-lactams, proteolytic cleavage at a single site impairs dimerization and abolishes repressor activity.

Its subcellular location is the cytoplasm. Its function is as follows. Transcriptional repressor that constitutively blocks the transcription of the gene for the penicillin-binding protein MecA. Binds DNA as a dimer. The polypeptide is Methicillin resistance regulatory protein MecI (mecI) (Mammaliicoccus sciuri (Staphylococcus sciuri)).